A 648-amino-acid chain; its full sequence is S-M checkpoint control protein rad4 (648 aa).

BRCT domains follow at residues 2-92 and 96-185; these read GSSK…DDGL and KHFL…YFQL. Residues 242 to 249 carry the Nuclear localization signal motif; the sequence is KRGKKRDR. BRCT domains are found at residues 298-384 and 392-486; these read NEAK…EHAL and SLVP…SPWA. Ser592 bears the Phosphoserine mark. Residues 643 to 648 carry the Nuclear localization signal motif; it reads RKLRRR.

As to quaternary structure, interacts with drc1/sld2. Interacts (via BRCT1,2 domains) with crb2; a single rad4 molecule interacts simultaneously with both 'Thr-187' phosphorylation sites in a crb2 dimer.

It is found in the nucleus. Functionally, essential component for DNA replication and also the checkpoint control system which couples S and M phases. May directly or indirectly interact with chromatin proteins to form the complex required for the initiation and/or progression of DNA synthesis. Interacts simultaneously with both 'Thr-187' phosphorylation sites in a crb2 dimer for establishing the DNA checkpoint. The protein is S-M checkpoint control protein rad4 (rad4) of Schizosaccharomyces pombe (strain 972 / ATCC 24843) (Fission yeast).